A 96-amino-acid polypeptide reads, in one-letter code: Small ribosomal subunit protein uS19 (96 aa).

Residues 1–30 form a disordered region; sequence MARSIKKGPFADKHLTKKVEDANKGNKKSV. Basic and acidic residues predominate over residues 9–24; that stretch reads PFADKHLTKKVEDANK.

Belongs to the universal ribosomal protein uS19 family.

Its function is as follows. Protein S19 forms a complex with S13 that binds strongly to the 16S ribosomal RNA. This is Small ribosomal subunit protein uS19 from Anaeromyxobacter sp. (strain Fw109-5).